The following is a 395-amino-acid chain: Chalcone synthase 3 (395 aa).

Val-2 carries the post-translational modification N-acetylvaline. Cys-169 is an active-site residue.

The protein belongs to the thiolase-like superfamily. Chalcone/stilbene synthases family.

It catalyses the reaction (E)-4-coumaroyl-CoA + 3 malonyl-CoA + 3 H(+) = 2',4,4',6'-tetrahydroxychalcone + 3 CO2 + 4 CoA. It functions in the pathway secondary metabolite biosynthesis; flavonoid biosynthesis. Functionally, the primary product of this enzyme is 4,2',4',6'-tetrahydroxychalcone (also termed naringenin-chalcone or chalcone) which can under specific conditions spontaneously isomerize into naringenin. The sequence is that of Chalcone synthase 3 (CHS3) from Sinapis alba (White mustard).